The chain runs to 718 residues: MNPNAVWPRTAQSSLKKHQVSLCTCQRRSHYRLRSFSTFADRKIHQSAGFSSSSKNHDRLSHRAREKLLDREFFLSLLSSASTQREAKSYLARLKAQHQPDLPQKPTSAPASTAKIPPLPSGVNLGSFYGASRSVYETPVFRQGPTPTPRQDQPERLHLALVKLSIPQTLDDTIIDGVAKTLAQLDRLGLTCCVMIDPGAAEDARLLRTLATEQADRLAIAIHKQPDSKSLRLDSVLSVDPATPHLPKVLSRKALLKPLRDGHTVILTPIAYTEDVPRAVMVSADDAVLALTRELAGLATFPDPDEDPLTTAERIGRLQKEVSLDRVILLHPLGGIPAFNWRQSSHVFINMEQEYDDIENELLQARDVISAGDANLTASDILQHPSSVAVSNPLSKFVHKEIVPLPPARSLSPMVPEAQRSAVEGHLENLRLSQKALAMLPSASSGIITSPIEVANSAKTDQPSDLSVVGTRRQRNPLIHNLLTDKPLLSSSLPMSRRGPIISAQGILNPVTSHTTFVKRGMPLTILPNPWVKPWSAQRQPRLRLDDPSIDLPRLVHLIEDSFNRKLDVQDYLNRVNDRLAGLIIAGEYEGGAILTWELPPGVQDDGSAENSARMVPYLDKFAVLKRSQGAGGVADIVFNAMVRTCFPNGVCWRSRKNNPVNKWYFERSLGTWKLSDTNWTMFWTTPGLVEDSQKFRDYEAVCRSIQPSWAEDTGVVD.

Residues 1–36 (MNPNAVWPRTAQSSLKKHQVSLCTCQRRSHYRLRSF) constitute a mitochondrion transit peptide. Residues 97–116 (QHQPDLPQKPTSAPASTAKI) are disordered. The N-acetyltransferase domain maps to 539–708 (RQPRLRLDDP…YEAVCRSIQP (170 aa)).

It belongs to the acetyltransferase family.

Its subcellular location is the mitochondrion. It carries out the reaction L-glutamate + acetyl-CoA = N-acetyl-L-glutamate + CoA + H(+). The protein operates within amino-acid biosynthesis; L-arginine biosynthesis; N(2)-acetyl-L-ornithine from L-glutamate: step 1/4. Functionally, N-acetylglutamate synthase involved in arginine biosynthesis. This Aspergillus clavatus (strain ATCC 1007 / CBS 513.65 / DSM 816 / NCTC 3887 / NRRL 1 / QM 1276 / 107) protein is Amino-acid acetyltransferase, mitochondrial (arg2).